The following is a 152-amino-acid chain: MYIGSDFMKDKYLMINTSVLPDVFEKVIEAKELMKAGKIKEITEAVKVVGISRSTYYKYKDYVFNVSELSSNQKVIISVTLNHRPGTLSKILDKIALYKGNILTINQEIPIHNTANVNITFDISQLNIEFNRLLEEISAMDNVIKLDLIAMD.

Residues isoleucine 76–methionine 151 enclose the ACT domain.

Belongs to the UPF0735 family.

The polypeptide is UPF0735 ACT domain-containing protein CTC_00116 (Clostridium tetani (strain Massachusetts / E88)).